The sequence spans 964 residues: Myocardin-related transcription factor A (964 aa).

Positions 1–291 (MTLLEPEMLM…KQDKGAPAMD (291 aa)) are mediates interaction with SCAI and ACTB. Residues 15 to 40 (SVLQLKLQQRRTREELVSQGIMPPLK) form an RPEL 1 repeat. Ser-41 carries the phosphoserine modification. The intervening spacer sequence 1 stretch occupies residues 41–58 (SPAAFHEQRRSLERARTE). The RPEL 2 repeat unit spans residues 59-84 (DYLKRKIRSRPERAELVRMHILEETS). A Bipartite Nuclear localization signal motif is present at residues 62 to 100 (KRKIRSRPERAELVRMHILEETSAEPSLQAKQLKLKRAR). The intervening spacer sequence 2 stretch occupies residues 85–102 (AEPSLQAKQLKLKRARLA). Residues 103 to 128 (DDLNEKIAQRPGPMELVEKNILPVES) form an RPEL 3 repeat. 2 disordered regions span residues 145–292 (ADSS…AMDS) and 328–371 (LPAP…RQSS). Residues Ser-159, Ser-174, and Ser-191 each carry the phosphoserine modification. Residues 186 to 197 (SATSISPTQVLS) are compositionally biased toward polar residues. Pro residues predominate over residues 215-224 (PPLPPAPLLP). Residues 251–266 (ASEKSQRSKKAKELKP) show a composition bias toward basic and acidic residues. The span at 340 to 365 (GSSAPTPSRSLSTSSSPSSGTPGPSG) shows a compositional bias: low complexity. 2 positions are modified to phosphoserine: Ser-349 and Ser-351. Thr-352 is subject to Phosphothreonine. Residues Ser-355 and Ser-358 each carry the phosphoserine modification. A Phosphothreonine modification is found at Thr-360. A Phosphoserine modification is found at Ser-371. One can recognise an SAP domain in the interval 385–419 (LDDMKVAELKQELKLRSLPVSGTKTELIERLRAYQ). Ser-423 and Ser-484 each carry phosphoserine. A disordered region spans residues 484–508 (STGSTPPVSPTPSERSLLSTGDENS). Thr-485 is subject to Phosphothreonine. Ser-487 carries the post-translational modification Phosphoserine. Position 488 is a phosphothreonine (Thr-488). Phosphoserine is present on Ser-492. Residue Thr-494 is modified to Phosphothreonine. Residue Ser-496 is modified to Phosphoserine. Residues 497–508 (ERSLLSTGDENS) show a composition bias toward polar residues. Phosphoserine is present on residues Ser-520, Ser-530, Ser-544, and Ser-548. A coiled-coil region spans residues 552–600 (RAELEGLDKDQMLQEKDKQIEELTRMLQQKQQLVELLRLQLEQQKRAQQ). 7 positions are modified to phosphoserine: Ser-605, Ser-606, Ser-651, Ser-687, Ser-718, Ser-724, and Ser-728. The tract at residues 638–673 (TTNHGDTQAPAPESPPVVVKQEAGPPEPDLAPSSQL) is disordered. Disordered stretches follow at residues 706–779 (NKSA…SSSQ) and 796–849 (ADFK…RLED). Positions 715 to 727 (PAGSPQQPLSQPG) are enriched in low complexity. Over residues 764-779 (TVTQQPKQQENGSSSQ) the composition is skewed to polar residues. Residues 796-810 (ADFKEPPSLPGKEKS) show a composition bias toward basic and acidic residues. Ser-810 carries the post-translational modification Phosphoserine. At Thr-822 the chain carries Phosphothreonine. 2 positions are modified to phosphoserine: Ser-826 and Ser-840. Position 842 is a phosphothreonine (Thr-842). Ser-892 is subject to Phosphoserine.

Interacts with SRF, forming the SRF-MRTFA nuclear complex which binds the 5'-CArG-3' consensus motif (CArG box) on DNA via SRF. Interacts (via RPEL repeats) with globular actin (G-actin), thereby regulating its subcellular location and activity of the complex formed with SRF. Either forms a trivalent (by binding three G-actin monomers) or pentavalent (by binding five G-actin monomers) complex with G-actin. Forms a nuclear ternary complex with SCAI and SRF, leading to suppress MRTFA-induced SRF transcriptional activity. Interacts with beta-actin (ACTB); interaction with ACTB prevents interaction with SCAI. Interacts with MRTFB. Post-translationally, phosphorylation at Ser-41 by Erk inhibits binding of globular actin (G-actin), unmasking the nuclear localization signal (NLS) and promoting nuclear import. In terms of tissue distribution, expressed in heart, brain, spleen, lung, liver, muscle, kidney and testis.

The protein localises to the cytoplasm. It localises to the nucleus. Functionally, transcription coactivator that associates with the serum response factor (SRF) transcription factor to control expression of genes regulating the cytoskeleton during development, morphogenesis and cell migration. The SRF-MRTFA complex activity responds to Rho GTPase-induced changes in cellular globular actin (G-actin) concentration, thereby coupling cytoskeletal gene expression to cytoskeletal dynamics. MRTFA binds G-actin via its RPEL repeats, regulating activity of the MRTFA-SRF complex. Activity is also regulated by filamentous actin (F-actin) in the nucleus. The sequence is that of Myocardin-related transcription factor A (Mrtfa) from Mus musculus (Mouse).